The chain runs to 158 residues: Ribosome maturation factor RimP (158 aa).

This sequence belongs to the RimP family.

Its subcellular location is the cytoplasm. Its function is as follows. Required for maturation of 30S ribosomal subunits. The sequence is that of Ribosome maturation factor RimP from Pediococcus pentosaceus (strain ATCC 25745 / CCUG 21536 / LMG 10740 / 183-1w).